The primary structure comprises 501 residues: Cytochrome P450 3A31 (501 aa).

Cysteine 440 is a binding site for heme.

This sequence belongs to the cytochrome P450 family. Requires heme as cofactor. Expressed constitutively in liver.

The protein resides in the endoplasmic reticulum membrane. Its subcellular location is the microsome membrane. It catalyses the reaction an organic molecule + reduced [NADPH--hemoprotein reductase] + O2 = an alcohol + oxidized [NADPH--hemoprotein reductase] + H2O + H(+). Functionally, cytochromes P450 are a group of heme-thiolate monooxygenases. In liver microsomes, this enzyme is involved in an NADPH-dependent electron transport pathway. It oxidizes a variety of structurally unrelated compounds, including steroids, fatty acids, and xenobiotics. The sequence is that of Cytochrome P450 3A31 (CYP3A31) from Mesocricetus auratus (Golden hamster).